A 235-amino-acid polypeptide reads, in one-letter code: Isoprenyl transferase (235 aa).

Asp21 is an active-site residue. Asp21 contacts Mg(2+). Residues 22-25 (GNAR), Trp26, Lys34, His38, and 66-68 (SSE) contribute to the substrate site. Residue Asn69 is the Proton acceptor of the active site. Residues Trp70, Arg72, Arg183, and 189–191 (RIS) contribute to the substrate site. A Mg(2+)-binding site is contributed by Glu202.

Belongs to the UPP synthase family. In terms of assembly, homodimer. Requires Mg(2+) as cofactor.

Functionally, catalyzes the condensation of isopentenyl diphosphate (IPP) with allylic pyrophosphates generating different type of terpenoids. This chain is Isoprenyl transferase, found in Rickettsia felis (strain ATCC VR-1525 / URRWXCal2) (Rickettsia azadi).